Here is a 75-residue protein sequence, read N- to C-terminus: Guanine nucleotide-binding protein G(I)/G(S)/G(O) subunit gamma-4 (75 aa).

Position 72 is a cysteine methyl ester (cysteine 72). A lipid anchor (S-geranylgeranyl cysteine) is attached at cysteine 72. Positions threonine 73–leucine 75 are cleaved as a propeptide — removed in mature form.

This sequence belongs to the G protein gamma family. As to quaternary structure, g proteins are composed of 3 units, alpha, beta and gamma. Interacts with beta-1 and beta-2, but not with beta-3. Interacts with KCNK1. Interacts (via C-terminus) with KCNK2/TREK-1 (via N-terminus); this interaction confers ion selectivity to Cl(-) and L-glutamate. As to expression, brain, kidney, pancreas, skeletal muscle and faintly in cardiac muscle.

The protein localises to the cell membrane. Guanine nucleotide-binding proteins (G proteins) are involved as a modulator or transducer in various transmembrane signaling systems. The beta and gamma chains are required for the GTPase activity, for replacement of GDP by GTP, and for G protein-effector interaction. In Homo sapiens (Human), this protein is Guanine nucleotide-binding protein G(I)/G(S)/G(O) subunit gamma-4 (GNG4).